The chain runs to 294 residues: Probable enoyl-CoA hydratase echA12 (294 aa).

It belongs to the enoyl-CoA hydratase/isomerase family.

The catalysed reaction is a (3S)-3-hydroxyacyl-CoA = a (2E)-enoyl-CoA + H2O. It catalyses the reaction a 4-saturated-(3S)-3-hydroxyacyl-CoA = a (3E)-enoyl-CoA + H2O. Its function is as follows. Could possibly oxidize fatty acids using specific components. The protein is Probable enoyl-CoA hydratase echA12 (echA12) of Mycobacterium leprae (strain TN).